The sequence spans 252 residues: Eukaryotic translation initiation factor 3 subunit J (252 aa).

Disordered regions lie at residues 24–107 (VPAG…TPEE) and 209–232 (KQSK…TMKD). A compositionally biased stretch (acidic residues) spans 36 to 56 (EDEEDDVKDNWDDEEEEEEVK). The segment covering 57 to 107 (EAEVKQEPKVSEKKKIAEKIKEKEKQQKKKQEELKKRLEAPEEHKELTPEE) has biased composition (basic and acidic residues). Residues 65–130 (KVSEKKKIAE…ESDLELAKET (66 aa)) are a coiled coil.

Belongs to the eIF-3 subunit J family. In terms of assembly, component of the eukaryotic translation initiation factor 3 (eIF-3) complex, which is composed of 13 subunits: EIF3A, EIF3B, EIF3C, EIF3D, EIF3E, EIF3F, EIF3G, EIF3H, EIF3I, EIF3J, EIF3K, EIF3L and EIF3M.

Its subcellular location is the cytoplasm. Its function is as follows. Component of the eukaryotic translation initiation factor 3 (eIF-3) complex, which is involved in protein synthesis of a specialized repertoire of mRNAs and, together with other initiation factors, stimulates binding of mRNA and methionyl-tRNAi to the 40S ribosome. The eIF-3 complex specifically targets and initiates translation of a subset of mRNAs involved in cell proliferation. The polypeptide is Eukaryotic translation initiation factor 3 subunit J (Gallus gallus (Chicken)).